A 430-amino-acid chain; its full sequence is Glutamate-1-semialdehyde 2,1-aminomutase (430 aa).

The residue at position 267 (Lys267) is an N6-(pyridoxal phosphate)lysine.

It belongs to the class-III pyridoxal-phosphate-dependent aminotransferase family. HemL subfamily. As to quaternary structure, homodimer. Pyridoxal 5'-phosphate serves as cofactor.

It localises to the cytoplasm. The enzyme catalyses (S)-4-amino-5-oxopentanoate = 5-aminolevulinate. It participates in porphyrin-containing compound metabolism; protoporphyrin-IX biosynthesis; 5-aminolevulinate from L-glutamyl-tRNA(Glu): step 2/2. This Cytophaga hutchinsonii (strain ATCC 33406 / DSM 1761 / CIP 103989 / NBRC 15051 / NCIMB 9469 / D465) protein is Glutamate-1-semialdehyde 2,1-aminomutase.